The chain runs to 176 residues: MIDDDGYRPNVGIVICNRQGQVMWARRFGQHSWQFPQGGINPGESAEQAMYRELFEEVGLSRKDVRILASTRNWLRYKLPKRLVRWDTKPVCIGQKQKWFLLQLVSGDAEINMQTSSTPEFDGWRWVSYWYPVRQVVSFKRDVYRRVMKEFASVVMSLQENTPKPQNTSAYRRKRG.

The Nudix hydrolase domain occupies 6-149 (GYRPNVGIVI…KRDVYRRVMK (144 aa)). The Nudix box signature appears at 38 to 59 (GGINPGESAEQAMYRELFEEVG).

This sequence belongs to the Nudix hydrolase family. RppH subfamily. Requires a divalent metal cation as cofactor.

Functionally, accelerates the degradation of transcripts by removing pyrophosphate from the 5'-end of triphosphorylated RNA, leading to a more labile monophosphorylated state that can stimulate subsequent ribonuclease cleavage. The sequence is that of RNA pyrophosphohydrolase from Shigella boydii serotype 18 (strain CDC 3083-94 / BS512).